The sequence spans 519 residues: Halolysin (519 aa).

The segment at residues 1–27 is a signal peptide (tat-type signal); sequence MAGTPNFDRRSFLRLAAAAGLTGMAGV. A propeptide spanning residues 28 to 116 is cleaved from the precursor; it reads TSATPGRSPG…AEKNATHEAL (89 aa). A Peptidase S8 domain is found at 127-400; the sequence is QYAPQQVNAD…SGRVDAANAV (274 aa). Active-site charge relay system residues include D154, H193, and S347. Positions 386-425 are disordered; sequence STKQGSGRVDAANAVTTDPGDGGGGGGGGSKETTYDGTLS. A compositionally biased stretch (gly residues) spans 405-415; it reads GDGGGGGGGGS.

The protein belongs to the peptidase S8 family. Predicted to be exported by the Tat system. The position of the signal peptide cleavage has not been experimentally proven.

The protein localises to the secreted. Functionally, probable secreted halophilic serine protease showing proteolytic activity toward the protease general substrate azocasein. This is Halolysin (hly) from Haloferax mediterranei (strain ATCC 33500 / DSM 1411 / JCM 8866 / NBRC 14739 / NCIMB 2177 / R-4) (Halobacterium mediterranei).